The primary structure comprises 180 residues: Superoxide dismutase [Cu-Zn] (180 aa).

An N-terminal signal peptide occupies residues 1 to 19 (MFMNLLSQVSNAIFPQVEA). Cu cation contacts are provided by His-68, His-70, and His-85. Cys-79 and Cys-171 are oxidised to a cystine. The Zn(2+) site is built by His-85, His-93, His-102, and Asp-105. A Cu cation-binding site is contributed by His-142.

The protein belongs to the Cu-Zn superoxide dismutase family. As to quaternary structure, homodimer. Cu cation serves as cofactor. Requires Zn(2+) as cofactor.

It is found in the cytoplasm. It catalyses the reaction 2 superoxide + 2 H(+) = H2O2 + O2. Destroys radicals which are normally produced within the cells and which are toxic to biological systems. Required for normal brood size. May be involved in regulating mpk-1 phosphorylation downstream of phosphatase ptp-2 during oocyte maturation. In Caenorhabditis briggsae, this protein is Superoxide dismutase [Cu-Zn].